The chain runs to 448 residues: Homogentisate 1,2-dioxygenase (448 aa).

His-303 (proton acceptor) is an active-site residue. Fe cation is bound by residues His-346 and Glu-352. 2 residues coordinate homogentisate: Tyr-361 and His-382. His-382 contributes to the Fe cation binding site.

It belongs to the homogentisate dioxygenase family. In terms of assembly, hexamer; dimer of trimers. Requires Fe cation as cofactor.

The enzyme catalyses homogentisate + O2 = 4-maleylacetoacetate + H(+). It participates in amino-acid degradation; L-phenylalanine degradation; acetoacetate and fumarate from L-phenylalanine: step 4/6. Its function is as follows. Involved in the catabolism of homogentisate (2,5-dihydroxyphenylacetate or 2,5-OH-PhAc), a central intermediate in the degradation of phenylalanine and tyrosine. Catalyzes the oxidative ring cleavage of the aromatic ring of homogentisate to yield maleylacetoacetate. The chain is Homogentisate 1,2-dioxygenase from Rhodopseudomonas palustris (strain BisA53).